We begin with the raw amino-acid sequence, 144 residues long: Transcription antitermination protein NusB (144 aa).

It belongs to the NusB family.

In terms of biological role, involved in transcription antitermination. Required for transcription of ribosomal RNA (rRNA) genes. Binds specifically to the boxA antiterminator sequence of the ribosomal RNA (rrn) operons. This is Transcription antitermination protein NusB from Leifsonia xyli subsp. xyli (strain CTCB07).